A 90-amino-acid chain; its full sequence is Delta-aiptatoxin-Adi1a (90 aa).

The signal sequence occupies residues methionine 1 to serine 21. The propeptide occupies serine 22 to isoleucine 44. Cystine bridges form between cysteine 50/cysteine 86, cysteine 52/cysteine 77, and cysteine 70/cysteine 87.

Belongs to the sea anemone sodium channel inhibitory toxin family.

It localises to the secreted. The protein localises to the nematocyst. Cardioactive peptide that acts on voltage-gated sodium channels (hNav1.5/SCN5A) and voltage-gated potassium channels (Kv). The activity on sodium channels consists of inhibition on sodium current inactivation with no significant effect on current activation. This effect may be caused by direct interaction of the toxin with sodium channel site-3. The activity on potassium channels consists of a significant increase of the amplitude of the transient component of the potassium current, shifting the current threshold to more negative membrane potentials. These effects are concentration-dependent and reversible and may be due to a direct interaction between the toxin and the voltage-sensing domain of the channel. Physiologically, this toxin increases the amplitude of cardiomyocyte contraction and slows the late phase of the twitch relaxation velocity with no induction of spontaneous twitching. It increases action potential duration of cardiomyocytes with no effect on its threshold and on the cell resting potential. On insects, it shows neurotoxic activity to the blowfly larvae S.falculaty, causing an immediate spasm that progressed to body contraction and paralysis. This chain is Delta-aiptatoxin-Adi1a, found in Exaiptasia diaphana (Tropical sea anemone).